Reading from the N-terminus, the 130-residue chain is Small ribosomal subunit protein uS8 (130 aa).

The protein belongs to the universal ribosomal protein uS8 family.

The chain is Small ribosomal subunit protein uS8 (RPS22A) from Eremothecium gossypii (strain ATCC 10895 / CBS 109.51 / FGSC 9923 / NRRL Y-1056) (Yeast).